The chain runs to 310 residues: Homoserine kinase (310 aa).

Residue 91–101 (PIGSGLGSSAC) coordinates ATP.

This sequence belongs to the GHMP kinase family. Homoserine kinase subfamily.

The protein localises to the cytoplasm. The catalysed reaction is L-homoserine + ATP = O-phospho-L-homoserine + ADP + H(+). Its pathway is amino-acid biosynthesis; L-threonine biosynthesis; L-threonine from L-aspartate: step 4/5. Its function is as follows. Catalyzes the ATP-dependent phosphorylation of L-homoserine to L-homoserine phosphate. This is Homoserine kinase from Escherichia coli O6:K15:H31 (strain 536 / UPEC).